The chain runs to 511 residues: Glucans biosynthesis protein G (511 aa).

An N-terminal signal peptide occupies residues 1-22; the sequence is MMKMRWLSAAVMLTLYTSSSWA.

The protein belongs to the OpgD/OpgG family.

It is found in the periplasm. It participates in glycan metabolism; osmoregulated periplasmic glucan (OPG) biosynthesis. In terms of biological role, involved in the biosynthesis of osmoregulated periplasmic glucans (OPGs). The protein is Glucans biosynthesis protein G of Escherichia coli (strain K12 / MC4100 / BW2952).